A 316-amino-acid chain; its full sequence is Erythritol catabolism regulatory protein EryD (316 aa).

Positions 23–42 form a DNA-binding region, H-T-H motif; sequence QSAVAKRLGLPSVKAHRLIA.

This sequence belongs to the SorC transcriptional regulatory family.

With respect to regulation, erythritol may act as an inducer, probably by binding to EryD and inhibiting its repressor activity. Functionally, represses the expression of the eryABCD operon, which is involved in erythritol catabolism. The protein is Erythritol catabolism regulatory protein EryD of Brucella abortus (strain 2308).